A 387-amino-acid polypeptide reads, in one-letter code: uncharacterized protein (387 aa).

The segment at 1–23 (MSSLPRNAVARNSKMHKKRDSGV) is disordered. Residues 98–129 (KIARDLKKRQEDYEKTKLEVERLKRSEELANK) adopt a coiled-coil conformation. The interval 146–255 (ENNTVEPNNE…NKKKKKEKNK (110 aa)) is disordered. Low complexity-rich tracts occupy residues 162–175 (EQIT…TTEQ) and 182–194 (EQTT…QTAE). A compositionally biased stretch (basic and acidic residues) spans 204-213 (TVEKSGDQST). The span at 214–231 (EKTTQQTAEESVEQSTEQ) shows a compositional bias: polar residues.

This is an uncharacterized protein from Acanthamoeba polyphaga mimivirus (APMV).